The chain runs to 502 residues: Cytochrome P450 CYP94D109 (502 aa).

Residues 3-23 form a helical membrane-spanning segment; that stretch reads SLSLIFISFITLIVFLVVSAS. C437 contacts heme.

The protein belongs to the cytochrome P450 family. In terms of tissue distribution, mainly expressed in leaves and, at low levels, in roots, fruits and stems.

Its subcellular location is the membrane. The protein operates within steroid metabolism; cholesterol metabolism. Functionally, involved in the biosynthesis of spiroketal steroid and saponin natural products from cholesterol such as diosgenin and analogs (e.g. furostanol and spirostanol), plant defense compounds used as main precursors for the industrial production of steroid hormones. During the 5,6-spiroketalization of cholesterol, may catalyze the 27-monohydroxylation of furostanol-type steroid to an intermediate product that undergoes a stereospecific formation of the terminal heterocycle to yield diosgenin. The protein is Cytochrome P450 CYP94D109 of Paris polyphylla (Daiswa polyphylla).